A 43-amino-acid polypeptide reads, in one-letter code: uncharacterized protein (43 aa).

The interval 1 to 43 (MFKSRIETGGFQFQVHGDDESAMDDEFIDDDDDQQVVEPVTDN) is disordered. Acidic residues predominate over residues 20–35 (ESAMDDEFIDDDDDQQ).

This is an uncharacterized protein from Dictyostelium discoideum (Social amoeba).